An 80-amino-acid chain; its full sequence is Conotoxin Bt6.5 (80 aa).

The signal sequence occupies residues 1-22; the sequence is MKLTCVLIIAVLFLTACQLATA. A propeptide spanning residues 23-45 is cleaved from the precursor; the sequence is KTYSTGRQKHRALRSTDKNIKLS. Disulfide bonds link Cys48-Cys62, Cys55-Cys66, and Cys61-Cys73.

This sequence belongs to the conotoxin O1 superfamily. Expressed by the venom duct.

It is found in the secreted. In terms of biological role, when injected intracranially in mice, induces a series of symptoms such as quivering, climbing, scratching, barrel rolling and paralysis of limbs. Unexpectedly, no effect is observed on ionic currents when tested on locust DUM neuron. The sequence is that of Conotoxin Bt6.5 from Conus betulinus (Beech cone).